Reading from the N-terminus, the 305-residue chain is MNQTTIKKTIGCSGIGLHSGKVVRLTLRPAPEDTGIVFHIRTEDGVHRLTPRPDDVIATGLATTLGLNGSSVATVEHLLAAIRGMQIDNIQIDIEGNEIPIMDGSAASFVFLLKDAGIARQNKPRQVYRIKKPVTYERDGKWIKAAPHDGLRIEYTIEFDHPAIGRQSMDIEVTPEAFAGIIAKARTFGFLREVEYLHSNGLALGGSLDNAIVLDEYNVLNEDGLRFDDEFVRHKILDFIGDMALLGAPLQGHFQVHCSGHALNNGFLRTISEHEELYLKRVELSETAQREHAVEAAPAGTPVAA.

The Zn(2+) site is built by histidine 77, histidine 234, and aspartate 238. Residue histidine 261 is the Proton donor of the active site.

This sequence belongs to the LpxC family. Requires Zn(2+) as cofactor.

The catalysed reaction is a UDP-3-O-[(3R)-3-hydroxyacyl]-N-acetyl-alpha-D-glucosamine + H2O = a UDP-3-O-[(3R)-3-hydroxyacyl]-alpha-D-glucosamine + acetate. It participates in glycolipid biosynthesis; lipid IV(A) biosynthesis; lipid IV(A) from (3R)-3-hydroxytetradecanoyl-[acyl-carrier-protein] and UDP-N-acetyl-alpha-D-glucosamine: step 2/6. Catalyzes the hydrolysis of UDP-3-O-myristoyl-N-acetylglucosamine to form UDP-3-O-myristoylglucosamine and acetate, the committed step in lipid A biosynthesis. This is UDP-3-O-acyl-N-acetylglucosamine deacetylase from Oleidesulfovibrio alaskensis (strain ATCC BAA-1058 / DSM 17464 / G20) (Desulfovibrio alaskensis).